The sequence spans 101 residues: ATP synthase subunit c (101 aa).

2 helical membrane passes run 31–51 (AFAY…GAGQ) and 81–101 (AISE…IFVG).

Belongs to the ATPase C chain family. In terms of assembly, F-type ATPases have 2 components, F(1) - the catalytic core - and F(0) - the membrane proton channel. F(1) has five subunits: alpha(3), beta(3), gamma(1), delta(1), epsilon(1). F(0) has three main subunits: a(1), b(2) and c(10-14). The alpha and beta chains form an alternating ring which encloses part of the gamma chain. F(1) is attached to F(0) by a central stalk formed by the gamma and epsilon chains, while a peripheral stalk is formed by the delta and b chains.

It localises to the cell membrane. F(1)F(0) ATP synthase produces ATP from ADP in the presence of a proton or sodium gradient. F-type ATPases consist of two structural domains, F(1) containing the extramembraneous catalytic core and F(0) containing the membrane proton channel, linked together by a central stalk and a peripheral stalk. During catalysis, ATP synthesis in the catalytic domain of F(1) is coupled via a rotary mechanism of the central stalk subunits to proton translocation. Functionally, key component of the F(0) channel; it plays a direct role in translocation across the membrane. A homomeric c-ring of between 10-14 subunits forms the central stalk rotor element with the F(1) delta and epsilon subunits. The sequence is that of ATP synthase subunit c from Mesomycoplasma hyopneumoniae (strain 7448) (Mycoplasma hyopneumoniae).